The chain runs to 242 residues: tRNA (guanine-N(1)-)-methyltransferase (242 aa).

S-adenosyl-L-methionine contacts are provided by residues G108 and 127–132 (IGDYVL).

Belongs to the RNA methyltransferase TrmD family. As to quaternary structure, homodimer.

It localises to the cytoplasm. The catalysed reaction is guanosine(37) in tRNA + S-adenosyl-L-methionine = N(1)-methylguanosine(37) in tRNA + S-adenosyl-L-homocysteine + H(+). Specifically methylates guanosine-37 in various tRNAs. The sequence is that of tRNA (guanine-N(1)-)-methyltransferase from Lactobacillus acidophilus (strain ATCC 700396 / NCK56 / N2 / NCFM).